Reading from the N-terminus, the 1357-residue chain is DNA-directed RNA polymerase subunit beta (1357 aa).

The protein belongs to the RNA polymerase beta chain family. The RNAP catalytic core consists of 2 alpha, 1 beta, 1 beta' and 1 omega subunit. When a sigma factor is associated with the core the holoenzyme is formed, which can initiate transcription.

The catalysed reaction is RNA(n) + a ribonucleoside 5'-triphosphate = RNA(n+1) + diphosphate. Its function is as follows. DNA-dependent RNA polymerase catalyzes the transcription of DNA into RNA using the four ribonucleoside triphosphates as substrates. The polypeptide is DNA-directed RNA polymerase subunit beta (Pseudomonas aeruginosa (strain ATCC 15692 / DSM 22644 / CIP 104116 / JCM 14847 / LMG 12228 / 1C / PRS 101 / PAO1)).